A 408-amino-acid chain; its full sequence is Alkane 1-monooxygenase (408 aa).

4 consecutive transmembrane segments (helical) span residues 30–50, 58–78, 102–122, and 126–146; these read LWMI…GYQF, IFAL…DTII, LVKS…YLVS, and TSFI…GIAV. The Fe cation site is built by His150, His154, His180, His184, and His185. A helical membrane pass occupies residues 254-274; sequence IIAIFGKGTIPYLVTQAFYGI. 3 residues coordinate Fe cation: His324, His327, and His328.

Belongs to the fatty acid desaturase type 1 family. AlkB subfamily. Fe(3+) serves as cofactor.

It localises to the cell inner membrane. It catalyses the reaction octane + 2 reduced [rubredoxin] + O2 + 2 H(+) = 2 oxidized [rubredoxin] + octan-1-ol + H2O. It participates in hydrocarbon metabolism; alkane degradation. In terms of biological role, catalyzes the hydroxylation of n-alkanes in the presence of a NADH-rubredoxin reductase and rubredoxin. It preferably hydroxylases long-chain-length alkanes with at least 12 carbon atoms. This chain is Alkane 1-monooxygenase (alkB), found in Acinetobacter baylyi (strain ATCC 33305 / BD413 / ADP1).